The following is a 163-amino-acid chain: Nucleotide-binding protein MT0592 (163 aa).

This sequence belongs to the YajQ family.

In terms of biological role, nucleotide-binding protein. In Mycobacterium tuberculosis (strain CDC 1551 / Oshkosh), this protein is Nucleotide-binding protein MT0592.